The following is a 910-amino-acid chain: Triacylglycerol lipase 4 (910 aa).

Residues 51–66 are compositionally biased toward basic and acidic residues; the sequence is SKDNSDVERVEEDAGK. A disordered region spans residues 51-120; it reads SKDNSDVERV…TDEGEDERQG (70 aa). At Ser-55 the chain carries Phosphoserine. Polar residues predominate over residues 70–85; sequence TGKNKTTNKVNFNLDT. The segment covering 90–116 has biased composition (acidic residues); the sequence is KLDDDQETVTENENNDIEMVETDEGED. The PNPLA domain maps to 282 to 483; the sequence is LVLSGGGTFG…DNDLPISRLS (202 aa). The GXGXXG signature appears at 286–291; that stretch reads GGGTFG. Positions 313–317 match the GXSXG motif; the sequence is GSSAG. Ser-315 (nucleophile) is an active-site residue. The Proton acceptor role is filled by Asp-470. Disordered regions lie at residues 657-683 and 713-777; these read EQTS…DNHI and SPSG…PILQ. A compositionally biased stretch (polar residues) spans 666-683; that stretch reads PENSTLLTRTPTKGDNHI. Residue Thr-675 is modified to Phosphothreonine; by Cdk1. Phosphoserine occurs at positions 737, 749, 751, and 836. A compositionally biased stretch (polar residues) spans 739 to 768; sequence TISTSRRPAKSFSFSVASPTSRMLRQSSKI. A disordered region spans residues 874–910; it reads RRHSIDGRPPSQATKSSPFRSRPSSSTQHKSTTSFTQ. Residues 889–899 are compositionally biased toward low complexity; it reads SSPFRSRPSSS. Ser-890 bears the Phosphoserine; by Cdk1 mark. Positions 900–910 are enriched in polar residues; it reads TQHKSTTSFTQ.

Phosphorylation at Thr-675 and Ser-890 by Cdk1/CDC28 stimulates enzyme activity in vivo.

The protein localises to the lipid droplet. The enzyme catalyses a triacylglycerol + H2O = a diacylglycerol + a fatty acid + H(+). It catalyses the reaction 1,2,3-tri-(9Z-octadecenoyl)-glycerol + H2O = di-(9Z)-octadecenoylglycerol + (9Z)-octadecenoate + H(+). The catalysed reaction is 1,2-dihexadecanoyl-sn-glycero-3-phosphocholine + H2O = 1-hexadecanoyl-sn-glycero-3-phosphocholine + hexadecanoate + H(+). It carries out the reaction cholesteryl (9Z-octadecenoate) + H2O = cholesterol + (9Z)-octadecenoate + H(+). The enzyme catalyses 1-(9Z-octadecenoyl)-sn-glycero-3-phosphate + (9Z)-octadecenoyl-CoA = 1,2-di-(9Z-octadecenoyl)-sn-glycero-3-phosphate + CoA. Its activity is regulated as follows. Phosphorylated and activated by cyclin-dependent kinase 1 (Cdk1/CDC28). Loses its lipolytic activity in cells lacking nonpolar lipids, but retains its side activity as lysophospholipid acyltransferase. Lipid particle-localized triacylglycerol (TAG) lipase. The lipid droplet/particle is a lipid storage compartment which serves as a depot of energy and building blocks for membrane lipid biosynthesis. Involved in the mobilization of the non-polar storage lipids triacylglycerols (TAGs) from lipid particles by hydrolysis of TAGs, releasing and supplying specific fatty acids to the appropriate metabolic pathways. Also has steryl ester (SE) hydrolase and phospholipase A(2) (PLA(2)) activities, and catalyzes the acylation of lysophosphatidic acid (LPA). Contributes to early bud formation in late G1 phase of the cell cycle upon phosphorylation and activation by cyclin-dependent kinase 1 (Cdk1/CDC28). The polypeptide is Triacylglycerol lipase 4 (TGL4) (Saccharomyces cerevisiae (strain ATCC 204508 / S288c) (Baker's yeast)).